The sequence spans 331 residues: Calcium-binding and coiled-coil domain-containing protein 2 (331 aa).

A CLIR motif is present at residues 128 to 131; the sequence is IMVV. The stretch at 132–309 forms a coiled coil; it reads INKEKVEEME…EKASWEKEKA (178 aa). Positions 189–310 are disordered; sequence KASWEKEKAS…KASWEKEKAP (122 aa). The LIR-like signature appears at 190 to 193; the sequence is ASWE. The segment at 292 to 302 is interaction with LGALS8; sequence KEKASWEEEKA.

It belongs to the CALCOCO family. Dimer. Part of a complex consisting of CALCOCO2, TAX1BP1 and MYO6. Interacts with MYO6. Interacts with GEMIN4. Interacts with ATG8 family members MAP1LC3A, MAP1LC3B, GABARAP, GABARAPL1 and GABARAPL2. Interacts with ATG8 family member MAP1LC3C. Interacts with LGALS8. Interacts with TOM1; the interaction is indirect and is mediated by MYO6, which acts as a bridge between TOM1 and CALCOCO2. Interacts with AZI2.

Its subcellular location is the cytoplasm. It is found in the perinuclear region. The protein resides in the cytoskeleton. The protein localises to the cytoplasmic vesicle. It localises to the autophagosome membrane. Its function is as follows. Xenophagy-specific receptor required for autophagy-mediated intracellular bacteria degradation. Acts as an effector protein of galectin-sensed membrane damage that restricts the proliferation of infecting pathogens upon entry into the cytosol by targeting LGALS8-associated bacteria for autophagy. Initially orchestrates bacteria targeting to autophagosomes and subsequently ensures pathogen degradation by regulating pathogen-containing autophagosome maturation. Bacteria targeting to autophagosomes relies on its interaction with MAP1LC3A, MAP1LC3B and/or GABARAPL2, whereas regulation of pathogen-containing autophagosome maturation requires the interaction with MAP3LC3C. May play a role in ruffle formation and actin cytoskeleton organization and seems to negatively regulate constitutive secretion. The protein is Calcium-binding and coiled-coil domain-containing protein 2 of Mus musculus (Mouse).